A 480-amino-acid polypeptide reads, in one-letter code: NADH-quinone oxidoreductase subunit N (480 aa).

Helical transmembrane passes span 10–30, 40–60, 80–100, 117–137, 166–186, 208–228, 246–266, 276–296, 304–324, 330–350, 374–394, 409–431, and 452–472; these read FISI…ILIE, WSSL…WGGI, FFTV…TAFF, AVFG…FLGI, LMGS…YGAI, VLFF…AALV, TAFM…RLFF, WNQV…FVAL, FFAY…VIGN, ALTF…AVLA, LASL…TAGF, YYGL…LRII, and IVGT…APFL.

Belongs to the complex I subunit 2 family. NDH-1 is composed of 14 different subunits. Subunits NuoA, H, J, K, L, M, N constitute the membrane sector of the complex.

It is found in the cell inner membrane. It catalyses the reaction a quinone + NADH + 5 H(+)(in) = a quinol + NAD(+) + 4 H(+)(out). In terms of biological role, NDH-1 shuttles electrons from NADH, via FMN and iron-sulfur (Fe-S) centers, to quinones in the respiratory chain. The immediate electron acceptor for the enzyme in this species is believed to be ubiquinone. Couples the redox reaction to proton translocation (for every two electrons transferred, four hydrogen ions are translocated across the cytoplasmic membrane), and thus conserves the redox energy in a proton gradient. The protein is NADH-quinone oxidoreductase subunit N of Protochlamydia amoebophila (strain UWE25).